Consider the following 453-residue polypeptide: BPI fold-containing family B member 6 (453 aa).

A signal peptide spans 1–18 (MLRILCLALCSLLTGTRA). The N-linked (GlcNAc...) asparagine glycan is linked to Asn-114. Cysteines 137 and 174 form a disulfide. N-linked (GlcNAc...) asparagine glycosylation is present at Asn-190.

The protein belongs to the BPI/LBP/Plunc superfamily. BPI/LBP family. As to expression, detected at very low levels in normal tonsils, and at higher levels in hypertrophic tonsils.

Its subcellular location is the secreted. This chain is BPI fold-containing family B member 6 (BPIFB6), found in Homo sapiens (Human).